Consider the following 149-residue polypeptide: Small ribosomal subunit protein uS17c (149 aa).

A chloroplast-targeting transit peptide spans 1 to 49 (MITSSLTSSLQALKLSSPFAHGSTPLSSLSKPNSFPNHRMPALVPVIRA).

Belongs to the universal ribosomal protein uS17 family. As to quaternary structure, part of the 30S ribosomal subunit.

The protein localises to the plastid. It localises to the chloroplast. In terms of biological role, one of the primary rRNA binding proteins, it binds specifically to the 5'-end of 16S ribosomal RNA. Required for optimal plastid performance in terms of photosynthesis and growth. Required for the translation of plastid mRNAs. Plays a critical role in biosynthesis of thylakoid membrane proteins encoded by chloroplast genes. This chain is Small ribosomal subunit protein uS17c (RPS17), found in Arabidopsis thaliana (Mouse-ear cress).